The chain runs to 395 residues: Lipid-A-disaccharide synthase (395 aa).

The protein belongs to the LpxB family.

The catalysed reaction is a lipid X + a UDP-2-N,3-O-bis[(3R)-3-hydroxyacyl]-alpha-D-glucosamine = a lipid A disaccharide + UDP + H(+). It functions in the pathway bacterial outer membrane biogenesis; LPS lipid A biosynthesis. Functionally, condensation of UDP-2,3-diacylglucosamine and 2,3-diacylglucosamine-1-phosphate to form lipid A disaccharide, a precursor of lipid A, a phosphorylated glycolipid that anchors the lipopolysaccharide to the outer membrane of the cell. The polypeptide is Lipid-A-disaccharide synthase (Bordetella avium (strain 197N)).